Consider the following 84-residue polypeptide: Translational regulator CsrA (84 aa).

This sequence belongs to the CsrA/RsmA family. Homodimer; the beta-strands of each monomer intercalate to form a hydrophobic core, while the alpha-helices form wings that extend away from the core.

The protein resides in the cytoplasm. Functionally, a translational regulator that binds mRNA to regulate translation initiation and/or mRNA stability. Usually binds in the 5'-UTR at or near the Shine-Dalgarno sequence preventing ribosome-binding, thus repressing translation. Its main target seems to be the major flagellin gene, while its function is anatagonized by FliW. The sequence is that of Translational regulator CsrA from Leptospira interrogans serogroup Icterohaemorrhagiae serovar Lai (strain 56601).